The primary structure comprises 229 residues: Peptidase E (229 aa).

Catalysis depends on charge relay system residues serine 120, aspartate 135, and histidine 157.

This sequence belongs to the peptidase S51 family.

It is found in the cytoplasm. The enzyme catalyses Dipeptidase E catalyzes the hydrolysis of dipeptides Asp-|-Xaa. It does not act on peptides with N-terminal Glu, Asn or Gln, nor does it cleave isoaspartyl peptides.. Hydrolyzes dipeptides containing N-terminal aspartate residues. May play a role in allowing the cell to use peptide aspartate to spare carbon otherwise required for the synthesis of the aspartate family of amino acids. This chain is Peptidase E (pepE), found in Salmonella typhimurium (strain LT2 / SGSC1412 / ATCC 700720).